Reading from the N-terminus, the 94-residue chain is DASH complex subunit dad2 (94 aa).

Residues 18-38 (KLRDSSNDMVQQIETLAAKLE) adopt a coiled-coil conformation. The disordered stretch occupies residues 72–94 (VRIPPSTSNTNASATEQGDVEEV). Positions 76 to 87 (PSTSNTNASATE) are enriched in polar residues.

Belongs to the DASH complex DAD2 family. Component of the DASH complex consisting of ask1, dad1, dad2, dad3, dad4, dam1, duo1, dad5, spc19 and spc34, with a stoichiometry of one copy of each subunit per complex. Multiple DASH complexes oligomerize to form a ring that encircles spindle microtubules and organizes the rod-like NDC80 complexes of the outer kinetochore. DASH complex oligomerization strengthens microtubule attachments. On cytoplasmic microtubules, DASH complexes appear to form patches instead of rings.

The protein resides in the nucleus. The protein localises to the cytoplasm. It is found in the cytoskeleton. It localises to the spindle. Its subcellular location is the chromosome. The protein resides in the centromere. The protein localises to the kinetochore. Component of the DASH complex that connects microtubules with kinetochores and couples microtubule depolymerisation to chromosome movement; it is involved in retrieving kinetochores to the spindle poles before their re-orientation on the spindle in early mitosis and allows microtubule depolymerization to pull chromosomes apart and resist detachment during anaphase. Kinetochores, consisting of a centromere-associated inner segment and a microtubule-contacting outer segment, play a crucial role in chromosome segregation by mediating the physical connection between centromeric DNA and microtubules. Kinetochores also serve as an input point for the spindle assembly checkpoint, which delays anaphase until all chromosomes have bioriented on the mitotic spindle. The DASH complex mediates bipolar kinetochore-microtubule attachments and facilitates the formation of additional interactions between outer kinetochore components and spindle microtubules. During chromosome movement along the microtubule, it is required both for the sliding of kinetochores along the lateral side of the microtubule and also for microtubule end-on pulling on the kinetochore. Modulates cytoplasmic microtubule dynamics by tracking the plus-end of shortening microtubules and slowing their depolymerization. In Schizosaccharomyces pombe (strain 972 / ATCC 24843) (Fission yeast), this protein is DASH complex subunit dad2.